The sequence spans 723 residues: Polyribonucleotide nucleotidyltransferase (723 aa).

Positions 488 and 494 each coordinate Mg(2+). The region spanning 555 to 614 (PKIITLNIKPEKIKDVIGPGGKQINAIIEETGVKIDIEQDGTVYIASQDQAMNRKAIAII) is the KH domain. Residues 624 to 692 (GEVYTGKVRR…HQGRVNLSRK (69 aa)) form the S1 motif domain. The segment at 692–723 (KALLEKKEQPEGDKKPQAEKKFYPKTKKPESK) is disordered. Positions 693-723 (ALLEKKEQPEGDKKPQAEKKFYPKTKKPESK) are enriched in basic and acidic residues.

This sequence belongs to the polyribonucleotide nucleotidyltransferase family. Requires Mg(2+) as cofactor.

Its subcellular location is the cytoplasm. It carries out the reaction RNA(n+1) + phosphate = RNA(n) + a ribonucleoside 5'-diphosphate. Involved in mRNA degradation. Catalyzes the phosphorolysis of single-stranded polyribonucleotides processively in the 3'- to 5'-direction. In Listeria welshimeri serovar 6b (strain ATCC 35897 / DSM 20650 / CCUG 15529 / CIP 8149 / NCTC 11857 / SLCC 5334 / V8), this protein is Polyribonucleotide nucleotidyltransferase.